Reading from the N-terminus, the 498-residue chain is Germ cell-less protein-like 2 (498 aa).

The short motif at 33–39 is the Nuclear localization signal element; the sequence is SRKRKRN. The 71-residue stretch at 90 to 160 folds into the BTB domain; sequence SDIKIRALGR…LYTDADLSIT (71 aa).

In terms of assembly, interacts with CUL3.

The protein localises to the nucleus matrix. Its pathway is protein modification; protein ubiquitination. In terms of biological role, possible function in spermatogenesis. Probable substrate-specific adapter of an E3 ubiquitin-protein ligase complex which mediates the ubiquitination and subsequent proteasomal degradation of target proteins. The sequence is that of Germ cell-less protein-like 2 (Gmcl2) from Mus musculus (Mouse).